We begin with the raw amino-acid sequence, 226 residues long: Cytidylate kinase (226 aa).

11–19 is a binding site for ATP; that stretch reads GPAGAGKST.

It belongs to the cytidylate kinase family. Type 1 subfamily.

Its subcellular location is the cytoplasm. The enzyme catalyses CMP + ATP = CDP + ADP. The catalysed reaction is dCMP + ATP = dCDP + ADP. This Pelotomaculum thermopropionicum (strain DSM 13744 / JCM 10971 / SI) protein is Cytidylate kinase.